The chain runs to 300 residues: Flaviolin linalyltransferase (300 aa).

This sequence belongs to the aromatic prenyltransferase family. As to quaternary structure, monomer.

It carries out the reaction flaviolin + (2E)-geranyl diphosphate = 3-linalylflaviolin + diphosphate. With respect to regulation, does not require magnesium or any other divalent metal ions for activity. In terms of biological role, involved in the biosynthesis of furanonaphthoquinone I (FNQ I). Catalyzes C- and O-prenylations of different phenolic substrates. With flaviolin as substrate, catalyzes the formation of a carbon-carbon-bond between C-3 (rather than C-1) of geranyl diphosphate and C-3 of flaviolin. With 1,3-dihydroxynaphthalene and 4-hydroxybenzoate as substrates, catalyzes O-prenylations. The protein is Flaviolin linalyltransferase of Streptomyces virginiae (Streptomyces cinnamonensis).